Consider the following 253-residue polypeptide: Coenzyme F420:L-glutamate ligase (253 aa).

GTP-binding positions include 9–12 (LPEI), 38–39 (ST), and Lys-43. Asp-113 lines the a divalent metal cation pocket. Asn-116 provides a ligand contact to GTP. Positions 148, 149, and 206 each coordinate a divalent metal cation. 204–211 (AGEGDDGT) lines the GTP pocket.

It belongs to the CofE family. Homodimer. It depends on Mg(2+) as a cofactor. Mn(2+) serves as cofactor. Requires K(+) as cofactor.

The catalysed reaction is oxidized coenzyme F420-0 + GTP + L-glutamate = oxidized coenzyme F420-1 + GDP + phosphate + H(+). It catalyses the reaction oxidized coenzyme F420-1 + GTP + L-glutamate = oxidized coenzyme F420-2 + GDP + phosphate + H(+). Its pathway is cofactor biosynthesis; coenzyme F420 biosynthesis. Catalyzes the GTP-dependent successive addition of two or more gamma-linked L-glutamates to the L-lactyl phosphodiester of 7,8-didemethyl-8-hydroxy-5-deazariboflavin (F420-0) to form coenzyme F420-0-glutamyl-glutamate (F420-2) or polyglutamated F420 derivatives. The protein is Coenzyme F420:L-glutamate ligase of Natronomonas pharaonis (strain ATCC 35678 / DSM 2160 / CIP 103997 / JCM 8858 / NBRC 14720 / NCIMB 2260 / Gabara) (Halobacterium pharaonis).